Consider the following 205-residue polypeptide: Large ribosomal subunit protein uL4 (205 aa).

A disordered region spans residues 53–77; that stretch reads RAAVRGGGRKPWKQKGTGRARAGSI. Basic residues predominate over residues 59-70; sequence GGRKPWKQKGTG.

This sequence belongs to the universal ribosomal protein uL4 family. In terms of assembly, part of the 50S ribosomal subunit.

Functionally, one of the primary rRNA binding proteins, this protein initially binds near the 5'-end of the 23S rRNA. It is important during the early stages of 50S assembly. It makes multiple contacts with different domains of the 23S rRNA in the assembled 50S subunit and ribosome. In terms of biological role, forms part of the polypeptide exit tunnel. The chain is Large ribosomal subunit protein uL4 from Acidithiobacillus ferrooxidans (strain ATCC 23270 / DSM 14882 / CIP 104768 / NCIMB 8455) (Ferrobacillus ferrooxidans (strain ATCC 23270)).